Reading from the N-terminus, the 249-residue chain is tRNA pseudouridine synthase A (249 aa).

D53 functions as the Nucleophile in the catalytic mechanism. Y111 lines the substrate pocket.

The protein belongs to the tRNA pseudouridine synthase TruA family. Homodimer.

The enzyme catalyses uridine(38/39/40) in tRNA = pseudouridine(38/39/40) in tRNA. Formation of pseudouridine at positions 38, 39 and 40 in the anticodon stem and loop of transfer RNAs. The sequence is that of tRNA pseudouridine synthase A from Streptococcus suis (strain 98HAH33).